The chain runs to 454 residues: MNPTQKPEPVYDMVILGASGFTGKYVVREALKFLQTPSSSPLKSLALAGRNPTRLTQSLEWAARPNPPPSSVAILTADTSDPDSLRRLCTQTKLILNCVGPFRIHGDPVVSACADSGCDYLDISGEPEFMERMEANYHDRAEETGSLIVSACGFDSIPAELGLLFNAKQWVSPSVPNQIEAYLSLESDKKIAGNFGTYESAVLGVANAEKLKELRRSRPRRPRPTICGPPAKGPTLENQKTIGLWALKLPSADAVVVRRTLTTLTEKPHGLPGINESPEQIQKREAFWSSIKPAHFGVKITSKSLFGIFRYVTLGVSLGLLSKFSFGRWLLLKFPSVFSLGWFQKKGPSEEEVESATFKMWFIGRGYSEESLASQGETKPDLEIITRISGPEIGYITTPITLVQCGLIVLGQRESLVKGGVYTPGIVFGSTDIQQRLEDNGISFELISKIKTQG.

The residue at position 1 (Met-1) is an N-acetylmethionine. A disordered region spans residues 215–234; sequence RRSRPRRPRPTICGPPAKGP.

This sequence belongs to the saccharopine dehydrogenase family.

Its subcellular location is the mitochondrion membrane. In Arabidopsis thaliana (Mouse-ear cress), this protein is Probable mitochondrial saccharopine dehydrogenase-like oxidoreductase At5g39410.